The primary structure comprises 583 residues: Cationic amino acid transporter 6, chloroplastic (583 aa).

The transit peptide at 1–50 (MEVQSSSNNGGHSSFSSLRVYLNSLSATPSRLSRRAISVSTSSDEMSRVR) directs the protein to the chloroplast. A run of 14 helical transmembrane segments spans residues 63 to 83 (WYDL…FVTT), 91 to 111 (AGPS…LSAF), 132 to 152 (ITFG…DYVM), 186 to 206 (GFNE…VIIC), 216 to 236 (NMIM…MGFI), 255 to 275 (FFPF…LSYI), 294 to 314 (IPVG…LMAV), 347 to 367 (VVGI…MLGQ), 397 to 417 (ASTF…LNVL), 418 to 438 (LNLV…ALIF), 450 to 470 (WPTL…TLIW), 481 to 501 (FMLG…QCVV), 509 to 529 (LWGV…NIFL), and 541 to 561 (FGFF…HASS).

Belongs to the amino acid-polyamine-organocation (APC) superfamily. Cationic amino acid transporter (CAT) (TC 2.A.3.3) family. In terms of tissue distribution, expressed in roots, stems, flowers, and leaves.

It is found in the plastid. It localises to the chloroplast membrane. Functionally, permease involved in the transport of the cationic neutral or acidic amino acids. The protein is Cationic amino acid transporter 6, chloroplastic (CAT6) of Arabidopsis thaliana (Mouse-ear cress).